The sequence spans 272 residues: R3H domain-containing protein 4 (272 aa).

The tract at residues Leu-141–Tyr-167 is disordered. Residues Thr-155 to Pro-165 show a composition bias toward basic and acidic residues. The 64-residue stretch at Met-191–His-254 folds into the R3H domain.

It is found in the nucleus. This Bos taurus (Bovine) protein is R3H domain-containing protein 4 (R3HDM4).